We begin with the raw amino-acid sequence, 190 residues long: Peptide deformylase (190 aa).

Residues Cys-106 and His-148 each contribute to the Fe cation site. The active site involves Glu-149. A Fe cation-binding site is contributed by His-152.

This sequence belongs to the polypeptide deformylase family. The cofactor is Fe(2+).

It catalyses the reaction N-terminal N-formyl-L-methionyl-[peptide] + H2O = N-terminal L-methionyl-[peptide] + formate. Functionally, removes the formyl group from the N-terminal Met of newly synthesized proteins. Requires at least a dipeptide for an efficient rate of reaction. N-terminal L-methionine is a prerequisite for activity but the enzyme has broad specificity at other positions. The protein is Peptide deformylase of Methylacidiphilum infernorum (isolate V4) (Methylokorus infernorum (strain V4)).